We begin with the raw amino-acid sequence, 478 residues long: UDP-N-acetylmuramate--L-alanine ligase (478 aa).

Position 126 to 132 (126 to 132 (GTHGKTT)) interacts with ATP.

The protein belongs to the MurCDEF family.

Its subcellular location is the cytoplasm. It carries out the reaction UDP-N-acetyl-alpha-D-muramate + L-alanine + ATP = UDP-N-acetyl-alpha-D-muramoyl-L-alanine + ADP + phosphate + H(+). Its pathway is cell wall biogenesis; peptidoglycan biosynthesis. Its function is as follows. Cell wall formation. The protein is UDP-N-acetylmuramate--L-alanine ligase of Mycolicibacterium vanbaalenii (strain DSM 7251 / JCM 13017 / BCRC 16820 / KCTC 9966 / NRRL B-24157 / PYR-1) (Mycobacterium vanbaalenii).